We begin with the raw amino-acid sequence, 333 residues long: Phosphoribosylformylglycinamidine cyclo-ligase (333 aa).

The protein belongs to the AIR synthase family.

It is found in the cytoplasm. It catalyses the reaction 2-formamido-N(1)-(5-O-phospho-beta-D-ribosyl)acetamidine + ATP = 5-amino-1-(5-phospho-beta-D-ribosyl)imidazole + ADP + phosphate + H(+). It functions in the pathway purine metabolism; IMP biosynthesis via de novo pathway; 5-amino-1-(5-phospho-D-ribosyl)imidazole from N(2)-formyl-N(1)-(5-phospho-D-ribosyl)glycinamide: step 2/2. The protein is Phosphoribosylformylglycinamidine cyclo-ligase of Methanosarcina mazei (strain ATCC BAA-159 / DSM 3647 / Goe1 / Go1 / JCM 11833 / OCM 88) (Methanosarcina frisia).